The following is a 232-amino-acid chain: Ribosomal RNA small subunit methyltransferase G (232 aa).

Residues Gly-93, Leu-98, 144 to 145 (VE), and Arg-163 each bind S-adenosyl-L-methionine.

This sequence belongs to the methyltransferase superfamily. RNA methyltransferase RsmG family.

It localises to the cytoplasm. It catalyses the reaction guanosine(527) in 16S rRNA + S-adenosyl-L-methionine = N(7)-methylguanosine(527) in 16S rRNA + S-adenosyl-L-homocysteine. In terms of biological role, specifically methylates the N7 position of guanine in position 527 of 16S rRNA. The protein is Ribosomal RNA small subunit methyltransferase G of Burkholderia pseudomallei (strain 668).